The following is a 594-amino-acid chain: MESNHKSGDGLSGTQKEAALRALVQRTGYSLVQENGQRKYGGPPPGWDTTPPERGCEIFIGKLPRDLFEDELIPLCEKIGKIYEMRMMMDFNGNNRGYAFVTFSNKQEAKNAIKQLNNYEIRNGRLLGVCASVDNCRLFVGGIPKTKKREEILSEMKKVTEGVVDVIVYPSAADKTKNRGFAFVEYESHRAAAMARRRLLPGRIQLWGHPIAVDWAEPEVEVDEDTMSSVKILYVRNLMLSTSEEMIEKEFNSIKPGAVERVKKIRDYAFVHFSNREDAVEAMKALNGKVLDGSPIEVTLAKPVDKDSYVRYTRGTGGRNTMLQEYTYPLSHVYDPTTTYLGAPVFYTPQAYAAIPSLHFPATKGHLSNRALIRTPSVREIYMNVPVGAAGVRGLGGRGYLAYTGLGRGYQVKGDKRQDKLYDLLPGMELTPMNTISLKPQGVKLAPQILEEICQKNNWGQPVYQLHSAIGQDQRQLFLYKVTIPALASQNPAIHPFTPPKLSAYVDEAKRYAAEHTLQTLGIPTEGGDAGTTAPTATSATVFPGYAVPSATAPVSTAQLKQAVTLGQDLAAYTTYEVYPTFAVTTRGDGYGTF.

RRM domains follow at residues 56 to 134 (CEIF…ASVD), 136 to 218 (CRLF…WAEP), and 231 to 303 (KILY…LAKP). The segment at 359 to 408 (HFPATKGHLSNRALIRTPSVREIYMNVPVGAAGVRGLGGRGYLAYTGLGR) is required for nuclear localization. A Phosphothreonine modification is found at Thr498.

Part of the apolipoprotein B mRNA editing complex with APOBEC1. Interacts with TNPO2; TNPO2 may be responsible for transport of A1CF into the nucleus. Interacts with SYNCRIP. Interacts with CELF2/CUGBP2. Interacts with RBM47. Isoforms 1 and 2 are widely expressed while isoforms 3 and 4 are restricted to liver and small intestine.

Its subcellular location is the nucleus. The protein resides in the endoplasmic reticulum. The protein localises to the cytoplasm. Essential component of the apolipoprotein B mRNA editing enzyme complex which is responsible for the postranscriptional editing of a CAA codon for Gln to a UAA codon for stop in APOB mRNA. Binds to APOB mRNA and is probably responsible for docking the catalytic subunit, APOBEC1, to the mRNA to allow it to deaminate its target cytosine. The complex also seems to protect the edited APOB mRNA from nonsense-mediated decay. The polypeptide is APOBEC1 complementation factor (A1cf) (Rattus norvegicus (Rat)).